The sequence spans 650 residues: Hemocyanin subunit 2 (650 aa).

Ser120 and Ser172 each carry an O-linked (GalNAc...) serine glycan. Cu cation-binding residues include His193, His197, and His225. Residue Asn309 is glycosylated (N-linked (GlcNAc...) asparagine). Residues His344, His348, and His384 each contribute to the Cu cation site.

This sequence belongs to the tyrosinase family. Hemocyanin subfamily. As to quaternary structure, hexamer of a number of different chains, of which five have been identified. In terms of processing, contains one N-glycosylated and three O-glycosylated residues. The position of one of the O-glycosylated residues has not been determined. O-linked glycan at Ser-120 may be composed of two GalNAc, three Gal, and two N-acetylneuraminic acid units for a total 1525-Da MW. As to expression, hemolymph.

The protein resides in the secreted. The protein localises to the extracellular space. Functionally, hemocyanins are copper-containing oxygen carriers occurring freely dissolved in the hemolymph of many mollusks and arthropods. This chain is Hemocyanin subunit 2, found in Carcinus aestuarii (Green crab).